Reading from the N-terminus, the 179-residue chain is Large ribosomal subunit protein uL6 (179 aa).

The protein belongs to the universal ribosomal protein uL6 family. As to quaternary structure, part of the 50S ribosomal subunit.

In terms of biological role, this protein binds to the 23S rRNA, and is important in its secondary structure. It is located near the subunit interface in the base of the L7/L12 stalk, and near the tRNA binding site of the peptidyltransferase center. In Chlorobium luteolum (strain DSM 273 / BCRC 81028 / 2530) (Pelodictyon luteolum), this protein is Large ribosomal subunit protein uL6.